Reading from the N-terminus, the 92-residue chain is Small ribosomal subunit protein uS19 (92 aa).

Residues M1–K27 form a disordered region. Residues P9–K27 show a composition bias toward basic and acidic residues.

It belongs to the universal ribosomal protein uS19 family.

Its function is as follows. Protein S19 forms a complex with S13 that binds strongly to the 16S ribosomal RNA. This Staphylococcus saprophyticus subsp. saprophyticus (strain ATCC 15305 / DSM 20229 / NCIMB 8711 / NCTC 7292 / S-41) protein is Small ribosomal subunit protein uS19.